The primary structure comprises 142 residues: MAIIIGSDAAGKRLKDVIKTFLKDNNHEVLDVTERKDLDFVDSTLAVVHEVQKNDKNLGIAIDAYGAGSFMVATKVKGMIAAEVSDERSAYMTRGHNNARIITLGAEIVGDELAKNIVKDFVEAKYDGGRHQIRVDMLNKMC.

Belongs to the LacAB/RpiB family. As to quaternary structure, heteromultimeric protein consisting of LacA and LacB.

The enzyme catalyses aldehydo-D-galactose 6-phosphate = keto-D-tagatose 6-phosphate. It participates in carbohydrate metabolism; D-galactose 6-phosphate degradation; D-tagatose 6-phosphate from D-galactose 6-phosphate: step 1/1. The sequence is that of Galactose-6-phosphate isomerase subunit LacA from Streptococcus mutans serotype c (strain ATCC 700610 / UA159).